We begin with the raw amino-acid sequence, 118 residues long: Putative pterin-4-alpha-carbinolamine dehydratase (118 aa).

It belongs to the pterin-4-alpha-carbinolamine dehydratase family.

The catalysed reaction is (4aS,6R)-4a-hydroxy-L-erythro-5,6,7,8-tetrahydrobiopterin = (6R)-L-erythro-6,7-dihydrobiopterin + H2O. The chain is Putative pterin-4-alpha-carbinolamine dehydratase from Pseudomonas entomophila (strain L48).